The chain runs to 121 residues: Basic phospholipase A2 homolog GodMT-II (121 aa).

Disulfide bonds link Cys-26–Cys-115, Cys-28–Cys-44, Cys-43–Cys-95, Cys-49–Cys-121, Cys-50–Cys-88, Cys-57–Cys-81, and Cys-75–Cys-86. The important for membrane-damaging activities in eukaryotes and bacteria; heparin-binding stretch occupies residues Lys-105 to Lys-117.

The protein belongs to the phospholipase A2 family. Group II subfamily. K49 sub-subfamily. In terms of assembly, monomer. In terms of tissue distribution, expressed by the venom gland.

The protein localises to the secreted. Snake venom phospholipase A2 homolog that lacks enzymatic activity but shows high myotoxic activities. In vivo, induces a mild edema when subcutaneously injected into mice foot pad. In Cerrophidion godmani (Porthidium godmani), this protein is Basic phospholipase A2 homolog GodMT-II.